Consider the following 114-residue polypeptide: uncharacterized protein (114 aa).

Residues 31-72 (EFEKLVSEQMKTMDKLLDLQSELDRCKQIEAELRHLERDARL) adopt a coiled-coil conformation.

This is an uncharacterized protein from Bacillus subtilis (strain 168).